Consider the following 138-residue polypeptide: Nanos homolog 2 (138 aa).

Positions 31 to 55 (ETQEIEEPSPGPPLGQDQGLGAPGA) are disordered. The segment at 62 to 116 (LCNFCKHNGESRHVYSSHQLKTPDGVVVCPILRHYVCPVCGATGDQAHTLKYCPL) adopts a Nanos-type zinc-finger fold. Residues Cys-63, Cys-66, His-79, Cys-90, Cys-98, Cys-101, His-109, and Cys-114 each coordinate Zn(2+). 2 short sequence motifs (C2HC) span residues 63-90 (CNFC…VVVC) and 98-114 (CPVC…LKYC).

This sequence belongs to the nanos family. In terms of assembly, interacts with CNOT1, CNOT3, CNOT6L, CNOT7 and CNOT9. As to expression, testis and ovary. Expression found in several spermatogenic stages: in cells on the periphery of the tubules which could correspond to spermatogonia, in spermatocytes and in round spermatids (at protein level).

The protein localises to the cytoplasm. Its subcellular location is the P-body. The protein resides in the perinuclear region. Its function is as follows. Plays a key role in the sexual differentiation of germ cells by promoting the male fate but suppressing the female fate. Represses the female fate pathways by suppressing meiosis, which in turn results in the promotion of the male fate. Maintains the suppression of meiosis by preventing STRA8 expression, which is required for premeiotic DNA replication, after CYP26B1 is decreased. Regulates the localization of the CCR4-NOT deadenylation complex to P-bodies and plays a role in recruiting the complex to trigger the degradation of mRNAs involved in meiosis. Required for the maintenance of the spermatogonial stem cell population. Not essential for the assembly of P-bodies but is required for the maintenance of their normal state. The protein is Nanos homolog 2 (NANOS2) of Homo sapiens (Human).